The primary structure comprises 529 residues: Glucose-6-phosphate isomerase (529 aa).

E322 acts as the Proton donor in catalysis. Catalysis depends on residues H351 and K455.

Belongs to the GPI family.

Its subcellular location is the cytoplasm. It carries out the reaction alpha-D-glucose 6-phosphate = beta-D-fructose 6-phosphate. It participates in carbohydrate biosynthesis; gluconeogenesis. It functions in the pathway carbohydrate degradation; glycolysis; D-glyceraldehyde 3-phosphate and glycerone phosphate from D-glucose: step 2/4. Its function is as follows. Catalyzes the reversible isomerization of glucose-6-phosphate to fructose-6-phosphate. This is Glucose-6-phosphate isomerase from Acaryochloris marina (strain MBIC 11017).